A 515-amino-acid chain; its full sequence is 1-pyrroline-5-carboxylate dehydrogenase (515 aa).

Catalysis depends on residues Glu-286 and Cys-320.

It belongs to the aldehyde dehydrogenase family. RocA subfamily.

It carries out the reaction L-glutamate 5-semialdehyde + NAD(+) + H2O = L-glutamate + NADH + 2 H(+). The protein operates within amino-acid degradation; L-proline degradation into L-glutamate; L-glutamate from L-proline: step 2/2. This chain is 1-pyrroline-5-carboxylate dehydrogenase, found in Bacillus pumilus (strain SAFR-032).